The following is a 392-amino-acid chain: Hercynylcysteine sulfoxide lyase (392 aa).

Lys-219 is modified (N6-(pyridoxal phosphate)lysine).

This sequence belongs to the class-V pyridoxal-phosphate-dependent aminotransferase family. EgtE subfamily. Pyridoxal 5'-phosphate is required as a cofactor.

Its subcellular location is the cytoplasm. It localises to the nucleus. The catalysed reaction is S-(hercyn-2-yl)-L-cysteine S-oxide + AH2 + H(+) = ergothioneine + pyruvate + A + NH4(+). It functions in the pathway amino-acid biosynthesis; ergothioneine biosynthesis. In terms of biological role, catalyzes the conversion of hercynylcysteine sulfoxide to ergothioneine by cleaving the cysteine residue at the sulfur atom, the last step in the biosynthesis pathway of ergothioneine. This Schizosaccharomyces pombe (strain 972 / ATCC 24843) (Fission yeast) protein is Hercynylcysteine sulfoxide lyase.